The sequence spans 543 residues: Zinc finger protein egl-43 (543 aa).

The positive regulatory (PR) domain stretch occupies residues 2-62 (SIDTDFLTSV…NLIKEADDGE (61 aa)). 2 consecutive C2H2-type zinc fingers follow at residues 159–181 (HKCG…SHIH) and 187–209 (FRCH…RRVH). Residues 213-233 (WTCPTCQSQMPSQAALTKHRP) form a C2H2-type 3; atypical zinc finger. Positions 299–380 (PDAECSSGHA…TSTKKRPTSH (82 aa)) are disordered. Residues 306–317 (GHASESSPTTTE) show a composition bias toward polar residues. Over residues 335–348 (TTSKSDDGEDRDSI) the composition is skewed to basic and acidic residues. 2 consecutive C2H2-type zinc fingers follow at residues 444–466 (YTCK…LRTH) and 472–495 (YKCQ…RNIH). A disordered region spans residues 496-543 (NKPNTSLTPHNHHRQRSLHNSTSTSTTTTTVHHPLLHLPGTSVPVPKV). The segment covering 513–533 (LHNSTSTSTTTTTVHHPLLHL) has biased composition (low complexity).

The protein localises to the nucleus. Probable transcription factor, required for migration of the hermaphrodite-specific motor neurons (HSNs) from the tail to the gonad primordium during HSN cell differentiation. Required for phasmid neuron development. Required to specify the pi-cell fate of ventral uterine precursor cell (VU) cells. Its function is as follows. Probable transcription factor, involved in lin-12 (Notch)-dependent anchor cell (AC) and ventral uterine (VU) precursor cell fate specification and in AC invasion. Prevents AC proliferation after AC cell specification by repressing lin-12 expression. May form a positive feedback loop, together with the transcription factor fos-1, that maintains mutual high levels of expression and so activates AC invasion. Functionally, dispensable for anchor cell (AC) invasion and for preventing AC proliferation. This is Zinc finger protein egl-43 from Caenorhabditis elegans.